The chain runs to 665 residues: Glycine--tRNA ligase beta subunit (665 aa).

It belongs to the class-II aminoacyl-tRNA synthetase family. Tetramer of two alpha and two beta subunits.

It is found in the cytoplasm. It carries out the reaction tRNA(Gly) + glycine + ATP = glycyl-tRNA(Gly) + AMP + diphosphate. The protein is Glycine--tRNA ligase beta subunit (glyS) of Rickettsia prowazekii (strain Madrid E).